A 310-amino-acid chain; its full sequence is HTH-type transcriptional activator TtdR (310 aa).

The region spanning 6–63 is the HTH lysR-type domain; that stretch reads PLAKDLQVLVEIVHSGSFSAAAATLGQTPAFVTKRIQILENTLATTLLNRSARGVALT. The H-T-H motif DNA-binding region spans 23–42; it reads FSAAAATLGQTPAFVTKRIQ.

It belongs to the LysR transcriptional regulatory family.

Positive regulator required for L-tartrate-dependent anaerobic growth on glycerol. Induces expression of the ttdA-ttdB-ygjE operon. This chain is HTH-type transcriptional activator TtdR (ttdR), found in Escherichia coli O6:H1 (strain CFT073 / ATCC 700928 / UPEC).